Here is a 258-residue protein sequence, read N- to C-terminus: Trans-aconitate 2-methyltransferase (258 aa).

The protein belongs to the methyltransferase superfamily. Tam family.

It localises to the cytoplasm. It carries out the reaction trans-aconitate + S-adenosyl-L-methionine = (E)-3-(methoxycarbonyl)pent-2-enedioate + S-adenosyl-L-homocysteine. In terms of biological role, catalyzes the S-adenosylmethionine monomethyl esterification of trans-aconitate. This chain is Trans-aconitate 2-methyltransferase, found in Deinococcus radiodurans (strain ATCC 13939 / DSM 20539 / JCM 16871 / CCUG 27074 / LMG 4051 / NBRC 15346 / NCIMB 9279 / VKM B-1422 / R1).